Here is a 371-residue protein sequence, read N- to C-terminus: Cytochrome b (371 aa).

A run of 4 helical transmembrane segments spans residues 25–45, 69–90, 105–125, and 170–190; these read FGSMLLTCLALQVLTGFFLAV, WMMQNLHAIGASMFFICIYIHI, WMSGITLLITLMATAFFGYVL, and FFALHFILPFAIISLSSLHVI. 2 residues coordinate heme b: His75 and His89. Heme b-binding residues include His174 and His188. His193 serves as a coordination point for a ubiquinone. The next 4 helical transmembrane spans lie at 218–238, 280–300, 312–332, and 339–358; these read HKDLLLLTLMMMFLFIIVSFF, LGGALALVMSIMILFCTPFTH, LSQLMFWTLVSTFITITWAAT, and FITISQVTSILYFTFFLSIP.

It belongs to the cytochrome b family. As to quaternary structure, the cytochrome bc1 complex contains 3 respiratory subunits (MT-CYB, CYC1 and UQCRFS1), 2 core proteins (UQCRC1 and UQCRC2) and probably 6 low-molecular weight proteins. Heme b serves as cofactor.

It localises to the mitochondrion inner membrane. Functionally, component of the ubiquinol-cytochrome c reductase complex (complex III or cytochrome b-c1 complex) that is part of the mitochondrial respiratory chain. The b-c1 complex mediates electron transfer from ubiquinol to cytochrome c. Contributes to the generation of a proton gradient across the mitochondrial membrane that is then used for ATP synthesis. This Liasis mackloti savuensis (Savu python) protein is Cytochrome b (MT-CYB).